The sequence spans 238 residues: Uridylate kinase (238 aa).

Position 12-15 (12-15 (KLSG)) interacts with ATP. A UMP-binding site is contributed by G54. ATP contacts are provided by G55 and R59. UMP is bound by residues D74 and 135-142 (TGNPYFST). Positions 168 and 171 each coordinate ATP.

It belongs to the UMP kinase family. In terms of assembly, homohexamer.

It is found in the cytoplasm. It catalyses the reaction UMP + ATP = UDP + ADP. It participates in pyrimidine metabolism; CTP biosynthesis via de novo pathway; UDP from UMP (UMPK route): step 1/1. Its activity is regulated as follows. Inhibited by UTP. Functionally, catalyzes the reversible phosphorylation of UMP to UDP. In Syntrophomonas wolfei subsp. wolfei (strain DSM 2245B / Goettingen), this protein is Uridylate kinase.